The primary structure comprises 157 residues: Heat shock 22 kDa protein, chloroplastic (157 aa).

In terms of domain architecture, sHSP spans 40–155 (GKAGHTHAPM…KPEPKRIAVT (116 aa)).

It belongs to the small heat shock protein (HSP20) family.

The protein localises to the plastid. It is found in the chloroplast. The sequence is that of Heat shock 22 kDa protein, chloroplastic from Chlamydomonas reinhardtii (Chlamydomonas smithii).